The following is a 421-amino-acid chain: Acyl-coenzyme A thioesterase 6 (421 aa).

Residues serine 232, aspartate 326, and histidine 360 each act as charge relay system in the active site. A Peroxisome targeting signal motif is present at residues 419 to 421 (SKI).

This sequence belongs to the C/M/P thioester hydrolase family.

Its subcellular location is the peroxisome. The protein resides in the cytoplasm. The enzyme catalyses pristanoyl-CoA + H2O = 2,6,10,14-tetramethylpentadecanoate + CoA + H(+). It carries out the reaction phytanoyl-CoA + H2O = 3,7,11,15-tetramethylhexadecanoate + CoA + H(+). It functions in the pathway lipid metabolism; fatty acid metabolism. Catalyzes the hydrolysis of acyl-CoAs into free fatty acids and coenzyme A (CoASH), regulating their respective intracellular levels. Catalyzes the hydrolysis of phytanoyl-CoA and pristanoyl-CoA, two methyl-branched fatty acids derived from phytol, that enter the body via the diet. The sequence is that of Acyl-coenzyme A thioesterase 6 from Homo sapiens (Human).